Here is a 339-residue protein sequence, read N- to C-terminus: MKEILEKIKKNAIEELNNVVDKETIESIRVKYLGKKGELTKILRGMGGLSAEERPIVGKLANEIRKNIEEIIETTLKEIKEKEKNIKLSEETIDITLPGKRQYLGKRHPLEQTLDKMKEIFINMGFTVEEGPEIELDYYNFEALNIPKNHPARGEQDTFYINDNVVLRTQTSPIQIRTMESQKLPIKMIAPGKVYRSDSVDATHSPIFYQMEGLVVDKGVTFADLKGTLDMFAKKMFGEDLKTKFRPHHFPFTEPSAEMDATCFVCHGEGCKVCKGEGWIEILGGGMVHPQVLKNCGIDPEVYSGFAFGFGVDRMVMQKYGIDDIRLLYESDMRFLNQF.

Glu254 is a Mg(2+) binding site.

The protein belongs to the class-II aminoacyl-tRNA synthetase family. Phe-tRNA synthetase alpha subunit type 1 subfamily. In terms of assembly, tetramer of two alpha and two beta subunits. It depends on Mg(2+) as a cofactor.

It localises to the cytoplasm. It catalyses the reaction tRNA(Phe) + L-phenylalanine + ATP = L-phenylalanyl-tRNA(Phe) + AMP + diphosphate + H(+). In Clostridium tetani (strain Massachusetts / E88), this protein is Phenylalanine--tRNA ligase alpha subunit.